The following is a 241-amino-acid chain: LexA repressor (241 aa).

A DNA-binding region (H-T-H motif) is located at residues 41–61 (FREIGNAAGLKSPSSVKHQLQ). Catalysis depends on for autocatalytic cleavage activity residues Ser-165 and Lys-202.

It belongs to the peptidase S24 family. Homodimer.

The enzyme catalyses Hydrolysis of Ala-|-Gly bond in repressor LexA.. Represses a number of genes involved in the response to DNA damage (SOS response), including recA and lexA. In the presence of single-stranded DNA, RecA interacts with LexA causing an autocatalytic cleavage which disrupts the DNA-binding part of LexA, leading to derepression of the SOS regulon and eventually DNA repair. In Bifidobacterium longum subsp. infantis (strain ATCC 15697 / DSM 20088 / JCM 1222 / NCTC 11817 / S12), this protein is LexA repressor.